Consider the following 129-residue polypeptide: Small ribosomal subunit protein uS11 (129 aa).

The disordered stretch occupies residues Val-109–Ser-129. The span at Cys-119–Ser-129 shows a compositional bias: basic residues.

This sequence belongs to the universal ribosomal protein uS11 family. Part of the 30S ribosomal subunit. Interacts with proteins S7 and S18. Binds to the C-terminus of IF-3; however exactly how IF-3 interacts with the 30S subunit is unclear.

Functionally, located on the upper part of the platform of the 30S subunit, where it bridges several disparate RNA helices of the 16S rRNA. Forms part of the Shine-Dalgarno cleft in the 70S ribosome. The protein is Small ribosomal subunit protein uS11 (rpsK) of Thermus thermophilus (strain ATCC BAA-163 / DSM 7039 / HB27).